Here is a 356-residue protein sequence, read N- to C-terminus: Alanine racemase, catabolic (356 aa).

Lysine 35 (proton acceptor; specific for D-alanine) is an active-site residue. Lysine 35 is subject to N6-(pyridoxal phosphate)lysine. Position 130 (arginine 130) interacts with substrate. Tyrosine 253 (proton acceptor; specific for L-alanine) is an active-site residue. Methionine 301 serves as a coordination point for substrate.

The protein belongs to the alanine racemase family. Pyridoxal 5'-phosphate serves as cofactor.

It carries out the reaction L-alanine = D-alanine. Functionally, isomerizes L-alanine to D-alanine which is then oxidized to pyruvate by DadA. The polypeptide is Alanine racemase, catabolic (dadX) (Escherichia coli O157:H7).